Reading from the N-terminus, the 1094-residue chain is Probable arabinosyltransferase C (1094 aa).

The next 13 membrane-spanning stretches (helical) occupy residues 28–50, 232–251, 264–286, 341–360, 373–392, 431–453, 466–488, 530–552, 565–582, 586–608, 620–642, 657–679, and 700–722; these read IARY…TPLL, AAMI…LHIL, PARW…WWHF, SIWM…WVIS, TSRA…WLPL, IGAL…LVAI, RFGV…IPIF, SIAR…AMSL, SRRI…MMFT, WTHH…AVAV, TVFA…GWWY, WRWS…AAWF, and LAGI…EVVS. Residues 817-831 are compositionally biased toward low complexity; the sequence is GSEPGTEGGTTAAPG. Positions 817-836 are disordered; it reads GSEPGTEGGTTAAPGINGSR.

It belongs to the emb family.

It localises to the cell membrane. Its function is as follows. Arabinosyl transferase responsible for the polymerization of arabinose into the arabinan of arabinogalactan. This is Probable arabinosyltransferase C (embC) from Mycobacterium bovis (strain ATCC BAA-935 / AF2122/97).